We begin with the raw amino-acid sequence, 249 residues long: Galactan endo-beta-1,3-galactanase (249 aa).

A signal peptide spans 1 to 21 (MKLFVVLACLAAPGTFPFVDA). The 214-residue stretch at 34–247 (STYWNNFYPW…KARNVQVTRT (214 aa)) folds into the GH16 domain. The N-linked (GlcNAc...) asparagine glycan is linked to asparagine 48. The active-site Nucleophile is the glutamate 138. The active-site Proton donor is the glutamate 143. An N-linked (GlcNAc...) asparagine glycan is attached at asparagine 156.

It belongs to the glycosyl hydrolase 16 family. Post-translationally, N-glycosylated.

The catalysed reaction is The enzyme specifically hydrolyzes beta-1,3-galactan and beta-1,3-galactooligosaccharides.. Its function is as follows. Specifically hydrolyzes beta-1,3-galactan in an endo-fashion. Requires at least 3 contiguous beta-1,3-residues. The polypeptide is Galactan endo-beta-1,3-galactanase (EN3GAL) (Flammulina velutipes (Agaricus velutipes)).